The primary structure comprises 398 residues: Acetate kinase (398 aa).

N8 contributes to the Mg(2+) binding site. ATP is bound at residue K15. R89 is a binding site for substrate. The active-site Proton donor/acceptor is D146. Residues H206–G210, D283–R285, and G331–N335 contribute to the ATP site. Residue E383 coordinates Mg(2+).

The protein belongs to the acetokinase family. In terms of assembly, homodimer. Mg(2+) serves as cofactor. It depends on Mn(2+) as a cofactor.

It is found in the cytoplasm. It carries out the reaction acetate + ATP = acetyl phosphate + ADP. Its pathway is metabolic intermediate biosynthesis; acetyl-CoA biosynthesis; acetyl-CoA from acetate: step 1/2. Catalyzes the formation of acetyl phosphate from acetate and ATP. Can also catalyze the reverse reaction. This is Acetate kinase from Streptococcus pyogenes serotype M5 (strain Manfredo).